The sequence spans 260 residues: Small ribosomal subunit protein uS3 (260 aa).

A KH type-2 domain is found at 39 to 114 (LRQYIEQKLG…QIRINVVEVQ (76 aa)). Residues 217-260 (GQEPDPLPPASRDRERDPRDRDREPRRRQQQRRRQQFEDRSNEG) form a disordered region. 2 stretches are compositionally biased toward basic and acidic residues: residues 227 to 243 (SRDR…EPRR) and 251 to 260 (QQFEDRSNEG).

It belongs to the universal ribosomal protein uS3 family. In terms of assembly, part of the 30S ribosomal subunit. Forms a tight complex with proteins S10 and S14.

Functionally, binds the lower part of the 30S subunit head. Binds mRNA in the 70S ribosome, positioning it for translation. The protein is Small ribosomal subunit protein uS3 of Nostoc punctiforme (strain ATCC 29133 / PCC 73102).